A 254-amino-acid chain; its full sequence is 4-hydroxy-tetrahydrodipicolinate reductase (254 aa).

Residue 7 to 12 participates in NAD(+) binding; the sequence is GASGRI. Residue arginine 35 participates in NADP(+) binding. Residues 91–93 and 115–118 each bind NAD(+); these read GTT and AHNM. The active-site Proton donor/acceptor is histidine 147. Histidine 148 lines the (S)-2,3,4,5-tetrahydrodipicolinate pocket. Lysine 151 acts as the Proton donor in catalysis. 157–158 lines the (S)-2,3,4,5-tetrahydrodipicolinate pocket; the sequence is GT.

Belongs to the DapB family.

The protein localises to the cytoplasm. It carries out the reaction (S)-2,3,4,5-tetrahydrodipicolinate + NAD(+) + H2O = (2S,4S)-4-hydroxy-2,3,4,5-tetrahydrodipicolinate + NADH + H(+). The catalysed reaction is (S)-2,3,4,5-tetrahydrodipicolinate + NADP(+) + H2O = (2S,4S)-4-hydroxy-2,3,4,5-tetrahydrodipicolinate + NADPH + H(+). It participates in amino-acid biosynthesis; L-lysine biosynthesis via DAP pathway; (S)-tetrahydrodipicolinate from L-aspartate: step 4/4. In terms of biological role, catalyzes the conversion of 4-hydroxy-tetrahydrodipicolinate (HTPA) to tetrahydrodipicolinate. The sequence is that of 4-hydroxy-tetrahydrodipicolinate reductase from Helicobacter pylori (strain Shi470).